The sequence spans 284 residues: Pantothenate synthetase (284 aa).

Residue 32–39 participates in ATP binding; sequence MGALHEGH. The active-site Proton donor is histidine 39. A (R)-pantoate-binding site is contributed by glutamine 63. Glutamine 63 lines the beta-alanine pocket. 149–152 contacts ATP; the sequence is GEKD. Position 155 (glutamine 155) interacts with (R)-pantoate. ATP-binding positions include valine 178 and 186–189; that span reads LSSR.

The protein belongs to the pantothenate synthetase family. Homodimer.

It localises to the cytoplasm. It catalyses the reaction (R)-pantoate + beta-alanine + ATP = (R)-pantothenate + AMP + diphosphate + H(+). Its pathway is cofactor biosynthesis; (R)-pantothenate biosynthesis; (R)-pantothenate from (R)-pantoate and beta-alanine: step 1/1. Functionally, catalyzes the condensation of pantoate with beta-alanine in an ATP-dependent reaction via a pantoyl-adenylate intermediate. The polypeptide is Pantothenate synthetase (Chelativorans sp. (strain BNC1)).